Here is a 349-residue protein sequence, read N- to C-terminus: Isopentenyl-diphosphate delta-isomerase (349 aa).

6–7 lines the substrate pocket; sequence RK. Residues 62–64, Ser93, and Asn122 each bind FMN; that span reads AMT. Gln152 provides a ligand contact to substrate. Mg(2+) is bound at residue Glu153. FMN is bound by residues Lys184, Thr214, 258–259, and 280–281; these read GG and AG.

This sequence belongs to the IPP isomerase type 2 family. As to quaternary structure, homooctamer. Dimer of tetramers. It depends on FMN as a cofactor. NADPH serves as cofactor. The cofactor is Mg(2+).

It localises to the cytoplasm. The catalysed reaction is isopentenyl diphosphate = dimethylallyl diphosphate. Functionally, involved in the biosynthesis of isoprenoids. Catalyzes the 1,3-allylic rearrangement of the homoallylic substrate isopentenyl (IPP) to its allylic isomer, dimethylallyl diphosphate (DMAPP). The polypeptide is Isopentenyl-diphosphate delta-isomerase (Bacillus cytotoxicus (strain DSM 22905 / CIP 110041 / 391-98 / NVH 391-98)).